The chain runs to 174 residues: Regenerating islet-derived protein 3-gamma (174 aa).

The signal sequence occupies residues 1–26 (MLPRVALTTMSWMLLSSLMLLSQVQG). A propeptide spanning residues 27-37 (EDAKEDVPTSR) is cleaved from the precursor. 3 disulfide bridges follow: C40–C51, C68–C170, and C145–C162. The C-type lectin domain occupies 47–171 (YGSYCYALFS…CISELPYVCK (125 aa)). A sufficient to activate EXTL3 region spans residues 103–118 (WIGLHDPTLGQEPNRG). H107 lines the Zn(2+) pocket. Residues 114–116 (EPN) carry the EPN motif. Zn(2+)-binding residues include E121 and H144.

As to quaternary structure, forms a hexameric membrane-permeabilizing oligomeric pore on membrane phospholipids. The hexamer is formed by three dimers related by helical symmetry. Forms filaments, filamentation traps pore complexes and limits damage to host cells. Interacts with EXTL3. Proteolytic processing by trypsin removes an inhibitory N-terminal propeptide and is essential for peptidoglycan binding and antibacterial activity. Expressed in injured skeletal muscles and sciatic nerve (at protein level). Expressed in the pancreas. Expression increases during the acute phase of pancreatitis.

It localises to the secreted. It is found in the cytoplasm. Lipopolysaccharide inhibits pore-forming activity, explaining why is bactericidal for Gram-positive but not Gram-negative bacteria. Functionally, bactericidal C-type lectin which acts exclusively against Gram-positive bacteria and mediates bacterial killing by binding to surface-exposed carbohydrate moieties of peptidoglycan. Restricts bacterial colonization of the intestinal epithelial surface and consequently limits activation of adaptive immune responses by the microbiota. Its function is as follows. Acts as a hormone in response to different stimuli like anti-inflammatory signals, such as IL17A, or gut microbiome. Is secreted by different cell types to activate its receptor EXTL3 and induce cell specific signaling pathways. Induced by IL17A in keratinocytes, regulates keratinocyte proliferation and differentiation after skin injury. In parallel, inhibits skin inflammation through the inhibition of inflammatory cytokines such as IL6 and TNF. Induced by IL22 in lung epithelial cells, inhibits cytokine production and regulates allergic airway inflammation. Induced in small intestine by inulin-enriched diet and Lactobacillus gasseri enriched microbiome, plays a role in the improvement of gut barrier function, the regulation of energy balance and glucose levels. Modulates microbiota composition in duodenal contents. Produced by nociceptor in response to endotoxins, prevents endotoxic death by targeting kynurenine pathway in microglia. Has bacteriostatic activity. In terms of biological role, has bactericidal activity against L.monocytogenes and methicillin-resistant S.aureus. The protein is Regenerating islet-derived protein 3-gamma of Rattus norvegicus (Rat).